The sequence spans 206 residues: MALPCTLGLGMLLALPGALGSGGSAEDSVGSSSVTVVLLLLLLLLLATGLALAWRRLSRDSGGYYHPARLGAALWGRTRRLLWASPPGRWLQARAELGSTDNDLERQEDEQDTDYDHVADGGLQADPGEGEQQCGEASSPEQVPVRAEEARDSDTEGDLVLGSPGPASAGGSAEALLSDLHAFAGSAAWDDSARAAGGQGLHVTAL.

The helical transmembrane segment at 34-54 (VTVVLLLLLLLLLATGLALAW) threads the bilayer. The interval 98-173 (GSTDNDLERQ…PGPASAGGSA (76 aa)) is disordered. Residues S99 and S153 each carry the phosphoserine modification. A compositionally biased stretch (low complexity) spans 161-173 (LGSPGPASAGGSA).

In terms of assembly, interacts with CD45/PTPRC. In terms of processing, phosphorylated on tyrosine residues.

Its subcellular location is the membrane. The sequence is that of Protein tyrosine phosphatase receptor type C-associated protein (PTPRCAP) from Homo sapiens (Human).